The chain runs to 1420 residues: DNA-directed RNA polymerase subunit beta' (1420 aa).

Zn(2+)-binding residues include Cys-70, Cys-72, Cys-85, and Cys-88. Mg(2+) is bound by residues Asp-464, Asp-466, and Asp-468. Residues Cys-823, Cys-897, Cys-904, and Cys-907 each coordinate Zn(2+).

This sequence belongs to the RNA polymerase beta' chain family. The RNAP catalytic core consists of 2 alpha, 1 beta, 1 beta' and 1 omega subunit. When a sigma factor is associated with the core the holoenzyme is formed, which can initiate transcription. Mg(2+) serves as cofactor. It depends on Zn(2+) as a cofactor.

The enzyme catalyses RNA(n) + a ribonucleoside 5'-triphosphate = RNA(n+1) + diphosphate. In terms of biological role, DNA-dependent RNA polymerase catalyzes the transcription of DNA into RNA using the four ribonucleoside triphosphates as substrates. This is DNA-directed RNA polymerase subunit beta' from Polynucleobacter asymbioticus (strain DSM 18221 / CIP 109841 / QLW-P1DMWA-1) (Polynucleobacter necessarius subsp. asymbioticus).